Here is a 714-residue protein sequence, read N- to C-terminus: K(+)-insensitive pyrophosphate-energized proton pump (714 aa).

Positions 1–20 (MRMTVIPIVILCGVLSVVYA) are cleaved as a signal peptide. Helical transmembrane passes span 52 to 74 (LTRQ…WYLL), 85 to 105 (GAVL…RANL), 128 to 148 (ITGM…YFVL), and 166 to 186 (VSLG…GGIF). Substrate is bound at residue K188. Mg(2+) contacts are provided by D191, D195, N218, and D221. The next 6 membrane-spanning stretches (helical) occupy residues 238-258 (AVSV…TPIL), 263-283 (VYPL…TFFV), 298-318 (GLIA…YATV), 333-353 (GTNL…IVVI), 383-403 (GLAV…GGII), and 411-431 (LFGT…IVAL). Residue D439 coordinates Mg(2+). 4 consecutive transmembrane segments (helical) span residues 470–490 (AVTK…LFAA), 522–542 (YVVA…GIAM), 591–611 (VIPS…VLLI), and 618–638 (AFAA…FVAI). Ca(2+) is bound by residues D648, D680, and D684. Residue K687 participates in substrate binding. The helical transmembrane segment at 693–713 (AVNPAIKITNIVALLLLAVLA) threads the bilayer.

It belongs to the H(+)-translocating pyrophosphatase (TC 3.A.10) family. K(+)-insensitive subfamily. Homodimer. Mg(2+) is required as a cofactor.

The protein resides in the acidocalcisome membrane. It carries out the reaction diphosphate + H2O + H(+)(in) = 2 phosphate + 2 H(+)(out). Functionally, proton pump that utilizes the energy of pyrophosphate hydrolysis as the driving force for proton movement across the membrane. Generates a proton motive force. This is K(+)-insensitive pyrophosphate-energized proton pump from Agrobacterium fabrum (strain C58 / ATCC 33970) (Agrobacterium tumefaciens (strain C58)).